The sequence spans 208 residues: ATP phosphoribosyltransferase (208 aa).

It belongs to the ATP phosphoribosyltransferase family. Short subfamily. As to quaternary structure, heteromultimer composed of HisG and HisZ subunits.

It localises to the cytoplasm. It carries out the reaction 1-(5-phospho-beta-D-ribosyl)-ATP + diphosphate = 5-phospho-alpha-D-ribose 1-diphosphate + ATP. It functions in the pathway amino-acid biosynthesis; L-histidine biosynthesis; L-histidine from 5-phospho-alpha-D-ribose 1-diphosphate: step 1/9. Functionally, catalyzes the condensation of ATP and 5-phosphoribose 1-diphosphate to form N'-(5'-phosphoribosyl)-ATP (PR-ATP). Has a crucial role in the pathway because the rate of histidine biosynthesis seems to be controlled primarily by regulation of HisG enzymatic activity. This is ATP phosphoribosyltransferase from Thermotoga neapolitana (strain ATCC 49049 / DSM 4359 / NBRC 107923 / NS-E).